A 428-amino-acid polypeptide reads, in one-letter code: GTPase Obg (428 aa).

The Obg domain maps to 1–158 (MFIDIAKVFI…LSIVLELKLL (158 aa)). Positions 159 to 331 (ADVGLLGFPN…VIKEAARMLK (173 aa)) constitute an OBG-type G domain. GTP contacts are provided by residues 165–172 (GFPNVGKS), 190–194 (FTTLK), 212–215 (DIPG), 282–285 (NKSD), and 312–314 (SAA). Residues serine 172 and threonine 192 each contribute to the Mg(2+) site. Positions 345–428 (MYIPEEKKFT…LNDFEFEYLL (84 aa)) constitute an OCT domain.

This sequence belongs to the TRAFAC class OBG-HflX-like GTPase superfamily. OBG GTPase family. As to quaternary structure, monomer. The cofactor is Mg(2+).

The protein resides in the cytoplasm. Functionally, an essential GTPase which binds GTP, GDP and possibly (p)ppGpp with moderate affinity, with high nucleotide exchange rates and a fairly low GTP hydrolysis rate. Plays a role in control of the cell cycle, stress response, ribosome biogenesis and in those bacteria that undergo differentiation, in morphogenesis control. The polypeptide is GTPase Obg (Clostridium botulinum (strain Alaska E43 / Type E3)).